A 552-amino-acid chain; its full sequence is Urocanate hydratase (552 aa).

NAD(+)-binding positions include 49-50 (GG), Gln-127, 173-175 (GMG), Asp-193, 239-240 (NA), 260-264 (QTSAH), 270-271 (YI), and Tyr-319. Residue Cys-407 is part of the active site. Position 489 (Gly-489) interacts with NAD(+).

The protein belongs to the urocanase family. The cofactor is NAD(+).

It localises to the cytoplasm. The catalysed reaction is 4-imidazolone-5-propanoate = trans-urocanate + H2O. It participates in amino-acid degradation; L-histidine degradation into L-glutamate; N-formimidoyl-L-glutamate from L-histidine: step 2/3. In terms of biological role, catalyzes the conversion of urocanate to 4-imidazolone-5-propionate. This is Urocanate hydratase from Bacillus cereus (strain AH187).